Consider the following 352-residue polypeptide: DNA polymerase IV (352 aa).

The UmuC domain maps to 4 to 185; that stretch reads IIHVDMDCFF…LPLSKIPGVG (182 aa). Residues Asp-8 and Asp-103 each coordinate Mg(2+). Glu-104 is an active-site residue.

This sequence belongs to the DNA polymerase type-Y family. Monomer. The cofactor is Mg(2+).

The protein localises to the cytoplasm. The catalysed reaction is DNA(n) + a 2'-deoxyribonucleoside 5'-triphosphate = DNA(n+1) + diphosphate. In terms of biological role, poorly processive, error-prone DNA polymerase involved in untargeted mutagenesis. Copies undamaged DNA at stalled replication forks, which arise in vivo from mismatched or misaligned primer ends. These misaligned primers can be extended by PolIV. Exhibits no 3'-5' exonuclease (proofreading) activity. May be involved in translesional synthesis, in conjunction with the beta clamp from PolIII. The chain is DNA polymerase IV from Yersinia pestis bv. Antiqua (strain Antiqua).